We begin with the raw amino-acid sequence, 157 residues long: UPF0251 protein CLD_3165 (157 aa).

It belongs to the UPF0251 family.

The polypeptide is UPF0251 protein CLD_3165 (Clostridium botulinum (strain Okra / Type B1)).